A 464-amino-acid polypeptide reads, in one-letter code: CD-NTase-associated protein 4 (464 aa).

An N-terminal endonuclease domain region spans residues 1 to 228 (MSASLLEKQS…FENFICHALE (228 aa)). The interval 229–464 (EDRTQWLSDP…EYMPTAELNI (236 aa)) is C-terminal SAVED domain.

The protein belongs to the Cap4 nuclease family. As to quaternary structure, a monomer in the absence of cAAA, in its presence it forms oligomers.

DNase activity is activated upon ligand binding. Effector DNase of a CBASS antivirus system. CBASS (cyclic oligonucleotide-based antiphage signaling system) provides immunity against bacteriophage. The CD-NTase protein synthesizes cyclic nucleotides in response to infection; these serve as specific second messenger signals. The signals activate a diverse range of effectors, leading to bacterial cell death and thus abortive phage infection. A type II-C CBASS system. Its function is as follows. Probably in the presence of its endogenous cyclic nucleotide (synthesized by the cognate CD-NTase protein in the CBASS operon), or of 2',3',3'-cyclic AMP-AMP-AMP (cAAA) synthesized by Acinetobacter sp. ATCC 27244, endonucleolytically degrades dsDNA in a non-sequence specific manner. It is not activated by other cyclic nucleotides. This Moraxella osloensis protein is CD-NTase-associated protein 4.